The following is a 204-amino-acid chain: Thymidylate kinase (204 aa).

11–18 provides a ligand contact to ATP; it reads GLDKSGKT.

This sequence belongs to the thymidylate kinase family.

It carries out the reaction dTMP + ATP = dTDP + ADP. Its pathway is pyrimidine metabolism; dTTP biosynthesis. This is Thymidylate kinase (TMK) from Camelus.